We begin with the raw amino-acid sequence, 612 residues long: Dihydroxy-acid dehydratase (612 aa).

D81 contributes to the Mg(2+) binding site. A [2Fe-2S] cluster-binding site is contributed by C122. The Mg(2+) site is built by D123 and K124. K124 carries the post-translational modification N6-carboxylysine. Position 195 (C195) interacts with [2Fe-2S] cluster. E491 provides a ligand contact to Mg(2+). S517 serves as the catalytic Proton acceptor.

Belongs to the IlvD/Edd family. As to quaternary structure, homodimer. Requires [2Fe-2S] cluster as cofactor. The cofactor is Mg(2+).

It carries out the reaction (2R)-2,3-dihydroxy-3-methylbutanoate = 3-methyl-2-oxobutanoate + H2O. It catalyses the reaction (2R,3R)-2,3-dihydroxy-3-methylpentanoate = (S)-3-methyl-2-oxopentanoate + H2O. The protein operates within amino-acid biosynthesis; L-isoleucine biosynthesis; L-isoleucine from 2-oxobutanoate: step 3/4. It participates in amino-acid biosynthesis; L-valine biosynthesis; L-valine from pyruvate: step 3/4. Functionally, functions in the biosynthesis of branched-chain amino acids. Catalyzes the dehydration of (2R,3R)-2,3-dihydroxy-3-methylpentanoate (2,3-dihydroxy-3-methylvalerate) into 2-oxo-3-methylpentanoate (2-oxo-3-methylvalerate) and of (2R)-2,3-dihydroxy-3-methylbutanoate (2,3-dihydroxyisovalerate) into 2-oxo-3-methylbutanoate (2-oxoisovalerate), the penultimate precursor to L-isoleucine and L-valine, respectively. In Haemophilus influenzae (strain PittGG), this protein is Dihydroxy-acid dehydratase.